The following is a 522-amino-acid chain: 2-isopropylmalate synthase (522 aa).

Positions 5 to 267 (VIIFDTTLRD…ETGINAKEIH (263 aa)) constitute a Pyruvate carboxyltransferase domain. Aspartate 14, histidine 202, histidine 204, and asparagine 238 together coordinate Mn(2+). The tract at residues 392–522 (QLQQLVVQSD…MHKNRELGGV (131 aa)) is regulatory domain.

The protein belongs to the alpha-IPM synthase/homocitrate synthase family. LeuA type 1 subfamily. As to quaternary structure, homodimer. It depends on Mn(2+) as a cofactor.

Its subcellular location is the cytoplasm. It catalyses the reaction 3-methyl-2-oxobutanoate + acetyl-CoA + H2O = (2S)-2-isopropylmalate + CoA + H(+). Its pathway is amino-acid biosynthesis; L-leucine biosynthesis; L-leucine from 3-methyl-2-oxobutanoate: step 1/4. Catalyzes the condensation of the acetyl group of acetyl-CoA with 3-methyl-2-oxobutanoate (2-ketoisovalerate) to form 3-carboxy-3-hydroxy-4-methylpentanoate (2-isopropylmalate). This Shewanella sp. (strain ANA-3) protein is 2-isopropylmalate synthase.